The sequence spans 428 residues: Enolase (428 aa).

(2R)-2-phosphoglycerate is bound at residue Q163. Catalysis depends on E205, which acts as the Proton donor. 3 residues coordinate Mg(2+): D242, E285, and D312. Positions 337, 366, 367, and 388 each coordinate (2R)-2-phosphoglycerate. The Proton acceptor role is filled by K337.

Belongs to the enolase family. Requires Mg(2+) as cofactor.

It is found in the cytoplasm. It localises to the secreted. The protein resides in the cell surface. It catalyses the reaction (2R)-2-phosphoglycerate = phosphoenolpyruvate + H2O. Its pathway is carbohydrate degradation; glycolysis; pyruvate from D-glyceraldehyde 3-phosphate: step 4/5. Catalyzes the reversible conversion of 2-phosphoglycerate (2-PG) into phosphoenolpyruvate (PEP). It is essential for the degradation of carbohydrates via glycolysis. The protein is Enolase of Novosphingobium aromaticivorans (strain ATCC 700278 / DSM 12444 / CCUG 56034 / CIP 105152 / NBRC 16084 / F199).